Here is a 357-residue protein sequence, read N- to C-terminus: SNF1-related protein kinase regulatory subunit gamma-like PV42b (357 aa).

CBS domains lie at 16 to 97 (MIDK…DGES), 113 to 185 (HCPE…SSQL), 198 to 273 (AIHN…WLPL), and 293 to 351 (STPG…ALLS).

It belongs to the 5'-AMP-activated protein kinase gamma subunit family. As to expression, expressed highly in rosette leaves, cauline leaves, open flowers, developing siliques and dry seeds, but at a low level in stems and floral buds.

Its function is as follows. Plays redundant role with PV42a in regulating male gametogenesis and pollen tube guidance. The protein is SNF1-related protein kinase regulatory subunit gamma-like PV42b (PV42B) of Arabidopsis thaliana (Mouse-ear cress).